A 282-amino-acid polypeptide reads, in one-letter code: ATP phosphoribosyltransferase (282 aa).

It belongs to the ATP phosphoribosyltransferase family. Long subfamily. The cofactor is Mg(2+).

It is found in the cytoplasm. It carries out the reaction 1-(5-phospho-beta-D-ribosyl)-ATP + diphosphate = 5-phospho-alpha-D-ribose 1-diphosphate + ATP. The protein operates within amino-acid biosynthesis; L-histidine biosynthesis; L-histidine from 5-phospho-alpha-D-ribose 1-diphosphate: step 1/9. Its activity is regulated as follows. Feedback inhibited by histidine. Its function is as follows. Catalyzes the condensation of ATP and 5-phosphoribose 1-diphosphate to form N'-(5'-phosphoribosyl)-ATP (PR-ATP). Has a crucial role in the pathway because the rate of histidine biosynthesis seems to be controlled primarily by regulation of HisG enzymatic activity. The sequence is that of ATP phosphoribosyltransferase from Haloarcula marismortui (strain ATCC 43049 / DSM 3752 / JCM 8966 / VKM B-1809) (Halobacterium marismortui).